The chain runs to 122 residues: Nuclear export protein (122 aa).

A Nuclear export signal motif is present at residues 96 to 105 (LWLPMKSLSL).

As to quaternary structure, binds M1 protein. May interact with human nucleoporins and exportin XPO1/CRM1.

It is found in the virion. Its subcellular location is the host nucleus. Mediates the nuclear export of encapsidated genomic RNAs (ribonucleoproteins, RNPs). Acts as an adapter between viral RNPs complexes and the nuclear export machinery of the cell. Possesses no intrinsic RNA-binding activity, but includes a C-terminal M1-binding domain. This domain is believed to allow recognition of RNPs to which the M1 protein is bound. Because the M1 protein is not available in large quantities until the later stages of infection, such an indirect recognition mechanism probably ensures that genomic RNPs are not exported from the nucleus before sufficient quantities of viral mRNA and progeny genomic RNA have been synthesized. Furthermore, the RNPs enters the cytoplasm only when they have associated with the M1 protein that is necessary to guide them to the plasma membrane. May down-regulate viral RNA synthesis when overproduced. This Homo sapiens (Human) protein is Nuclear export protein (NS).